The sequence spans 435 residues: Iron(III) enterobactin esterase (435 aa).

This sequence belongs to the Fes family.

The protein resides in the cytoplasm. The enzyme catalyses Fe(III)-enterobactin + 3 H2O + H(+) = Fe(III)-[N-(2,3-dihydroxybenzoyl)-L-serine] + 2 N-(2,3-dihydroxybenzoyl)-L-serine. The catalysed reaction is Fe(III)-enterobactin + H2O = Fe(III)-[N-(2,3-dihydroxybenzoyl)-L-serine]3 + H(+). It carries out the reaction Fe(III)-[N-(2,3-dihydroxybenzoyl)-L-serine]3 + H2O + H(+) = Fe(III)-[N-(2,3-dihydroxybenzoyl)-L-serine]2 + N-(2,3-dihydroxybenzoyl)-L-serine. It catalyses the reaction Fe(III)-[N-(2,3-dihydroxybenzoyl)-L-serine]2 + H2O + H(+) = Fe(III)-[N-(2,3-dihydroxybenzoyl)-L-serine] + N-(2,3-dihydroxybenzoyl)-L-serine. Catalyzes the hydrolysis of ferric enterobactin (Fe-Ent). Is responsible for the release of iron from ferric enterobactin. The polypeptide is Iron(III) enterobactin esterase (fes) (Dickeya dadantii (strain 3937) (Erwinia chrysanthemi (strain 3937))).